The primary structure comprises 101 residues: CRISPR-associated endoribonuclease Cas2 (101 aa).

Aspartate 8 contributes to the Mg(2+) binding site.

Belongs to the CRISPR-associated endoribonuclease Cas2 protein family. Homodimer, forms a heterotetramer with a Cas1 homodimer. Requires Mg(2+) as cofactor.

Its function is as follows. CRISPR (clustered regularly interspaced short palindromic repeat), is an adaptive immune system that provides protection against mobile genetic elements (viruses, transposable elements and conjugative plasmids). CRISPR clusters contain sequences complementary to antecedent mobile elements and target invading nucleic acids. CRISPR clusters are transcribed and processed into CRISPR RNA (crRNA). Functions as a ssRNA-specific endoribonuclease. Involved in the integration of spacer DNA into the CRISPR cassette. This Lacticaseibacillus rhamnosus (strain ATCC 53103 / LMG 18243 / GG) (Lactobacillus rhamnosus) protein is CRISPR-associated endoribonuclease Cas2.